Consider the following 191-residue polypeptide: Thymidylate kinase (191 aa).

7–14 (GVDGVGKS) lines the ATP pocket.

This sequence belongs to the thymidylate kinase family.

The enzyme catalyses dTMP + ATP = dTDP + ADP. Phosphorylation of dTMP to form dTDP in both de novo and salvage pathways of dTTP synthesis. This is Thymidylate kinase from Helicobacter pylori (strain HPAG1).